Here is a 732-residue protein sequence, read N- to C-terminus: Zinc/cadmium/lead-transporting P-type ATPase (732 aa).

At 1 to 124 (MSTPDNHGKK…QAADEPQASR (124 aa)) the chain is on the cytoplasmic side. One can recognise an HMA domain in the interval 48-112 (TRYSWKVSGM…AVQKAGYSLR (65 aa)). Residues D58, C59, and C62 each coordinate Zn(2+). The chain crosses the membrane as a helical span at residues 125 to 145 (LKENLPLITLIVMMAISWGLE). Residue Q146 is a topological domain, periplasmic. A helical transmembrane segment spans residues 147–167 (FNHPFGQLAFIATTLVGLYPI). The Cytoplasmic portion of the chain corresponds to 168-179 (ARQALRLIKSGS). A helical membrane pass occupies residues 180–197 (YFAIETLMSVAAIGALFI). Topologically, residues 198–202 (GATAE) are periplasmic. Residues 203-222 (AAMVLLLFLIGERLEGWAAS) form a helical membrane-spanning segment. Topologically, residues 223–356 (RARQGVSALM…IDRFSRIYTP (134 aa)) are cytoplasmic. A helical transmembrane segment spans residues 357–377 (AIMAVALLVTLVPPLLFAASW). At 378–383 (QEWIYK) the chain is on the periplasmic side. Residues 384 to 404 (GLTLLLIGCPCALVISTPAAI) traverse the membrane as a helical segment. Zn(2+) is bound by residues C392 and C394. The Cytoplasmic segment spans residues 405–685 (TSGLAAAARR…RATHANIRQN (281 aa)). Catalysis depends on D436, which acts as the 4-aspartylphosphate intermediate. Residues D436, T438, and D628 each coordinate Mg(2+). Residues 686-702 (ITIALGLKGIFLVTTLL) traverse the membrane as a helical segment. Residues 703–707 (GMTGL) are Periplasmic-facing. The chain crosses the membrane as a helical span at residues 708–729 (WLAVLADTGATVLVTANALRLL). Zn(2+) is bound at residue D714. Over 730–732 (RRR) the chain is Cytoplasmic.

The protein belongs to the cation transport ATPase (P-type) (TC 3.A.3) family. Type IB subfamily.

The protein localises to the cell inner membrane. The catalysed reaction is Pb(2+)(in) + ATP + H2O = Pb(2+)(out) + ADP + phosphate + H(+). It catalyses the reaction Zn(2+)(in) + ATP + H2O = Zn(2+)(out) + ADP + phosphate + H(+). It carries out the reaction Cd(2+)(in) + ATP + H2O = Cd(2+)(out) + ADP + phosphate + H(+). Its function is as follows. Confers resistance to zinc, cadmium and lead. Couples the hydrolysis of ATP with the export of zinc, cadmium or lead. The protein is Zinc/cadmium/lead-transporting P-type ATPase of Shigella sonnei (strain Ss046).